The sequence spans 289 residues: Proteasome subunit beta (289 aa).

The propeptide at M1 to A55 is removed in mature form; by autocatalysis. The Nucleophile role is filled by T56.

The protein belongs to the peptidase T1B family. The 20S proteasome core is composed of 14 alpha and 14 beta subunits that assemble into four stacked heptameric rings, resulting in a barrel-shaped structure. The two inner rings, each composed of seven catalytic beta subunits, are sandwiched by two outer rings, each composed of seven alpha subunits. The catalytic chamber with the active sites is on the inside of the barrel. Has a gated structure, the ends of the cylinder being occluded by the N-termini of the alpha-subunits. Is capped by the proteasome-associated ATPase, ARC.

It is found in the cytoplasm. The catalysed reaction is Cleavage of peptide bonds with very broad specificity.. It functions in the pathway protein degradation; proteasomal Pup-dependent pathway. Its activity is regulated as follows. The formation of the proteasomal ATPase ARC-20S proteasome complex, likely via the docking of the C-termini of ARC into the intersubunit pockets in the alpha-rings, may trigger opening of the gate for substrate entry. Interconversion between the open-gate and close-gate conformations leads to a dynamic regulation of the 20S proteasome proteolysis activity. Its function is as follows. Component of the proteasome core, a large protease complex with broad specificity involved in protein degradation. This is Proteasome subunit beta from Mycobacterium marinum (strain ATCC BAA-535 / M).